A 623-amino-acid chain; its full sequence is Methionine--tRNA ligase (623 aa).

Residues 11–21 (PYANGPRHIGH) carry the 'HIGH' region motif. Residues cysteine 143, cysteine 146, cysteine 156, and cysteine 159 each contribute to the Zn(2+) site. Residues 347 to 351 (KFSSS) carry the 'KMSKS' region motif. Position 350 (serine 350) interacts with ATP.

Belongs to the class-I aminoacyl-tRNA synthetase family. MetG type 1 subfamily. Monomer. Zn(2+) serves as cofactor.

Its subcellular location is the cytoplasm. The enzyme catalyses tRNA(Met) + L-methionine + ATP = L-methionyl-tRNA(Met) + AMP + diphosphate. Its function is as follows. Is required not only for elongation of protein synthesis but also for the initiation of all mRNA translation through initiator tRNA(fMet) aminoacylation. The chain is Methionine--tRNA ligase from Bifidobacterium animalis subsp. lactis (strain AD011).